The chain runs to 271 residues: uncharacterized protein (271 aa).

Belongs to the anhydro-N-acetylmuramic acid kinase family.

This is an uncharacterized protein from Yersinia enterocolitica.